The following is a 251-amino-acid chain: Triosephosphate isomerase (251 aa).

Residue 9–11 participates in substrate binding; the sequence is NWK. The active-site Electrophile is H93. E163 serves as the catalytic Proton acceptor. Substrate-binding positions include G169, S209, and 230–231; that span reads GG.

Belongs to the triosephosphate isomerase family. As to quaternary structure, homodimer.

It is found in the cytoplasm. The catalysed reaction is D-glyceraldehyde 3-phosphate = dihydroxyacetone phosphate. It functions in the pathway carbohydrate biosynthesis; gluconeogenesis. Its pathway is carbohydrate degradation; glycolysis; D-glyceraldehyde 3-phosphate from glycerone phosphate: step 1/1. Its function is as follows. Involved in the gluconeogenesis. Catalyzes stereospecifically the conversion of dihydroxyacetone phosphate (DHAP) to D-glyceraldehyde-3-phosphate (G3P). This is Triosephosphate isomerase from Ruegeria pomeroyi (strain ATCC 700808 / DSM 15171 / DSS-3) (Silicibacter pomeroyi).